We begin with the raw amino-acid sequence, 401 residues long: E3 ubiquitin-protein ligase RGLG4 (401 aa).

Residues 1-43 (MTMGNFLKRFGSGKSRSSRNMTLGTTSSQSHEPSPSDPSLSLA) form a disordered region. The span at 8-19 (KRFGSGKSRSSR) shows a compositional bias: low complexity. Residues 20–32 (NMTLGTTSSQSHE) show a composition bias toward polar residues. In terms of domain architecture, VWFA spans 79 to 299 (NLILGVDFTK…KETAFALAAL (221 aa)). The segment at 326–350 (VPRPPPIPYTPPTNAELPSTASPAS) is disordered. The segment covering 327–336 (PRPPPIPYTP) has biased composition (pro residues). Residues 341 to 350 (ELPSTASPAS) are compositionally biased toward polar residues. The RING-type zinc-finger motif lies at 357–390 (CPICLTNRKDVAFSCGHMTCGDCGSKISNCPICR).

As to quaternary structure, interacts with UBC30, GRXS17 and GLB3. Widely expressed.

The protein resides in the cytoplasm. It localises to the nucleus. It carries out the reaction S-ubiquitinyl-[E2 ubiquitin-conjugating enzyme]-L-cysteine + [acceptor protein]-L-lysine = [E2 ubiquitin-conjugating enzyme]-L-cysteine + N(6)-ubiquitinyl-[acceptor protein]-L-lysine.. In terms of biological role, possesses E3 ubiquitin-protein ligase in vitro. Acts as upstream modulator of jasmonate (JA) signaling in response to various stimuli, such as JA-inhibited root growth, JA-inductive gene expression, coronatine-mediated pathogen susceptibility, wound-stimulated expression of JA-responsive genes and wound-induced JA biosynthesis. Controls fumonisin B1 (FB1)-triggered programmed cell death (PCD) by modulating the JA signaling pathway. May mediate salicylic acid (SA) suppression of JA signaling in FB1-induced responses. May mediate the formation of 'Lys-48'-linked multiubiquitin chains. Mediates the polyubiquitination and subsequent proteasomal degradation of the target protein GRXS17. This Arabidopsis thaliana (Mouse-ear cress) protein is E3 ubiquitin-protein ligase RGLG4.